The following is a 207-amino-acid chain: Lipid A acyltransferase PagP (207 aa).

The N-terminal stretch at 1 to 24 is a signal peptide; that stretch reads MKFDLTTAYTLSIPLLASSGTVLA. Residues histidine 79, aspartate 122, and serine 123 contribute to the active site.

This sequence belongs to the lipid A palmitoyltransferase family. Homodimer.

The protein localises to the cell outer membrane. The catalysed reaction is a lipid A + a 1,2-diacyl-sn-glycero-3-phosphocholine = a hepta-acyl lipid A + a 2-acyl-sn-glycero-3-phosphocholine. It carries out the reaction a lipid IVA + a 1,2-diacyl-sn-glycero-3-phosphocholine = a lipid IVB + a 2-acyl-sn-glycero-3-phosphocholine. It catalyses the reaction a lipid IIA + a 1,2-diacyl-sn-glycero-3-phosphocholine = a lipid IIB + a 2-acyl-sn-glycero-3-phosphocholine. Its function is as follows. Transfers a fatty acid residue from the sn-1 position of a phospholipid to the N-linked hydroxyfatty acid chain on the proximal unit of lipid A or its precursors. The polypeptide is Lipid A acyltransferase PagP (Photorhabdus asymbiotica subsp. asymbiotica (strain ATCC 43949 / 3105-77) (Xenorhabdus luminescens (strain 2))).